The chain runs to 329 residues: 4-hydroxythreonine-4-phosphate dehydrogenase (329 aa).

Residues histidine 136 and threonine 137 each coordinate substrate. Residues histidine 166, histidine 211, and histidine 266 each coordinate a divalent metal cation. Substrate is bound by residues lysine 274, asparagine 283, and arginine 292.

Belongs to the PdxA family. In terms of assembly, homodimer. The cofactor is Zn(2+). Mg(2+) serves as cofactor. It depends on Co(2+) as a cofactor.

Its subcellular location is the cytoplasm. The catalysed reaction is 4-(phosphooxy)-L-threonine + NAD(+) = 3-amino-2-oxopropyl phosphate + CO2 + NADH. Its pathway is cofactor biosynthesis; pyridoxine 5'-phosphate biosynthesis; pyridoxine 5'-phosphate from D-erythrose 4-phosphate: step 4/5. Catalyzes the NAD(P)-dependent oxidation of 4-(phosphooxy)-L-threonine (HTP) into 2-amino-3-oxo-4-(phosphooxy)butyric acid which spontaneously decarboxylates to form 3-amino-2-oxopropyl phosphate (AHAP). This is 4-hydroxythreonine-4-phosphate dehydrogenase from Escherichia coli O139:H28 (strain E24377A / ETEC).